The following is a 462-amino-acid chain: Myo-inositol transporter 3B (462 aa).

10 consecutive transmembrane segments (helical) span residues 1–21, 31–51, 61–81, 91–111, 194–214, 218–238, 245–265, 289–309, 324–344, and 354–374; these read MAILISDVFFTIGAVLIASSY, IILGIGVGGAAVIAPLFITET, IGVNAFFIPFGQVVADAIGAG, LLFALGVVPSVLQLLLFHYLP, LCGFNTLLYYAGTLFGLLGLS, LGGLIPAGTNAVFVLIGMSLV, GLMLFGVPIMLLGLVWNIIGF, VVIGGIVFFVVGYGLTYSHLV, GSGVATTVCWIANLVVSVSYL, and GTYGFYLGLSVIGFAFVVFCF.

The protein belongs to the major facilitator superfamily. Sugar transporter (TC 2.A.1.1) family.

The protein localises to the cell membrane. The catalysed reaction is myo-inositol(out) + H(+)(out) = myo-inositol(in) + H(+)(in). Transporter for myo-inositol. This is Myo-inositol transporter 3B from Cryptococcus neoformans var. grubii serotype A (strain H99 / ATCC 208821 / CBS 10515 / FGSC 9487) (Filobasidiella neoformans var. grubii).